The following is a 273-amino-acid chain: 3-((Z)-2-isocyanoethenyl)-1H-indole synthase (273 aa).

Positions 105, 107, and 254 each coordinate Fe cation.

It belongs to the TfdA dioxygenase family. Fe(2+) serves as cofactor.

It catalyses the reaction (2S)-3-(1H-indol-3-yl)-2-isocyanopropanoate + 2-oxoglutarate + O2 + H(+) = 3-[(Z)-2-isocyanoethenyl]-1H-indole + succinate + 2 CO2 + H2O. Its function is as follows. Involved in the biosynthesis of ambiguines, a family of hapalindole-type alkaloids. Responsible for the synthesis of Z-3-(2-isocyanoethen)-indole, a biosynthetic precursor to all ambiguines. The polypeptide is 3-((Z)-2-isocyanoethenyl)-1H-indole synthase (Fischerella ambigua (strain UTEX 1903)).